The sequence spans 37 residues: NADH dehydrogenase [ubiquinone] 1 alpha subcomplex subunit 5 (37 aa).

Belongs to the complex I NDUFA5 subunit family. As to quaternary structure, complex I is composed of about 45 different subunits.

The protein resides in the mitochondrion inner membrane. In terms of biological role, accessory subunit of the mitochondrial membrane respiratory chain NADH dehydrogenase (Complex I), that is believed not to be involved in catalysis. Complex I functions in the transfer of electrons from NADH to the respiratory chain. The immediate electron acceptor for the enzyme is believed to be ubiquinone. This is NADH dehydrogenase [ubiquinone] 1 alpha subcomplex subunit 5 from Solanum tuberosum (Potato).